Here is a 479-residue protein sequence, read N- to C-terminus: MKYQVVIGLEVHTQLTTNTKIFCGCSTRFGAEPNSQTCPVCLGLPGALPVLNRQVVEYAIRAGLATNCSITQRNVFARKNYFYPDLPKGYQISQFDLPICQHGHLDIDLEGERKRIGITRIHMEEDAGKLVHADIPGVDDSCVDLNRACTPLLEIVSEPDMRSPDEAIAYLKKLHQIVMYLGICDGNLEEGSFRCDANVSLMPVGSNVFGTRAELKNINSFKFIKQAIEYEIERQAEILDDGGKVIQETRLFDPNTGTTRSMRGKEEAHDYRYFPDPDLVPVIISDDWIERVRGELPELPEAKRARFMSELSLPEYDAEVLAASRELAQYFEDTFALFPQAKTVSNWVMGEVTRALNDDNNRSIAECPVTPALLADLLKLMEKGTISGKIAKTVFDEMYKTGKAPEKIVEEKGLVQVSDTGAIEAMIDEVLEKNAGQVAEYRGGKETLFGFFVGQVMRASKGKANPGVVNEMLLKKLQG.

The protein belongs to the GatB/GatE family. GatB subfamily. Heterotrimer of A, B and C subunits.

The enzyme catalyses L-glutamyl-tRNA(Gln) + L-glutamine + ATP + H2O = L-glutaminyl-tRNA(Gln) + L-glutamate + ADP + phosphate + H(+). It catalyses the reaction L-aspartyl-tRNA(Asn) + L-glutamine + ATP + H2O = L-asparaginyl-tRNA(Asn) + L-glutamate + ADP + phosphate + 2 H(+). In terms of biological role, allows the formation of correctly charged Asn-tRNA(Asn) or Gln-tRNA(Gln) through the transamidation of misacylated Asp-tRNA(Asn) or Glu-tRNA(Gln) in organisms which lack either or both of asparaginyl-tRNA or glutaminyl-tRNA synthetases. The reaction takes place in the presence of glutamine and ATP through an activated phospho-Asp-tRNA(Asn) or phospho-Glu-tRNA(Gln). This Geobacter sp. (strain M21) protein is Aspartyl/glutamyl-tRNA(Asn/Gln) amidotransferase subunit B.